A 348-amino-acid chain; its full sequence is Uroporphyrinogen decarboxylase (348 aa).

Substrate is bound by residues 27 to 31 (RQAGR), Phe-46, Asp-76, Tyr-152, Ser-207, and His-320.

The protein belongs to the uroporphyrinogen decarboxylase family. In terms of assembly, homodimer.

Its subcellular location is the cytoplasm. It carries out the reaction uroporphyrinogen III + 4 H(+) = coproporphyrinogen III + 4 CO2. It functions in the pathway porphyrin-containing compound metabolism; protoporphyrin-IX biosynthesis; coproporphyrinogen-III from 5-aminolevulinate: step 4/4. In terms of biological role, catalyzes the decarboxylation of four acetate groups of uroporphyrinogen-III to yield coproporphyrinogen-III. This chain is Uroporphyrinogen decarboxylase, found in Bacillus cereus (strain G9842).